A 466-amino-acid polypeptide reads, in one-letter code: MSSPNTWSTGSTVYSPVFSQKMTLWILLLLSLYPGFTSQKSDDDYEDYASNKTWVLTPKVPEGDVTVILNNLLEGYDNKLRPDIGVKPTLIHTDMYVNSIGPVNAINMEYTIDIFFAQTWYDRRLKFNSTIKVLRLNSNMVGKIWIPDTFFRNSKKADAHWITTPNRMLRIWNDGRVLYTLRLTIDAECQLQLHNFPMDEHSCPLEFSSYGYPREEIVYQWKRSSVEVGDTRSWRLYQFSFVGLRNTTEVVKTTSGDYVVMSVYFDLSRRMGYFTIQTYIPCTLIVVLSWVSFWINKDAVPARTSLGITTVLTMTTLSTIARKSLPKVSYVTAMDLFVSVCFIFVFSALVEYGTLHYFVSNRKPSKDKDKKKKNPAPTIDIRPRSATIQMNNATHLQERDEEYGYECLDGKDCASFFCCFEDCRTGAWRHGRIHIRIAKMDSYARIFFPTAFCLFNLVYWVSYLYL.

The signal sequence occupies residues 1–38 (MSSPNTWSTGSTVYSPVFSQKMTLWILLLLSLYPGFTS). Topologically, residues 39–274 (QKSDDDYEDY…FDLSRRMGYF (236 aa)) are extracellular. 2 N-linked (GlcNAc...) asparagine glycosylation sites follow: N51 and N128. An intrachain disulfide couples C189 to C203. N246 carries an N-linked (GlcNAc...) asparagine glycan. A helical membrane pass occupies residues 275-295 (TIQTYIPCTLIVVLSWVSFWI). Residues 296 to 301 (NKDAVP) lie on the Cytoplasmic side of the membrane. The helical transmembrane segment at 302 to 321 (ARTSLGITTVLTMTTLSTIA) threads the bilayer. Over 322–333 (RKSLPKVSYVTA) the chain is Extracellular. A helical membrane pass occupies residues 334–358 (MDLFVSVCFIFVFSALVEYGTLHYF). At 359-442 (VSNRKPSKDK…IHIRIAKMDS (84 aa)) the chain is on the cytoplasmic side. A helical transmembrane segment spans residues 443–463 (YARIFFPTAFCLFNLVYWVSY). The Extracellular portion of the chain corresponds to 464 to 466 (LYL).

This sequence belongs to the ligand-gated ion channel (TC 1.A.9) family. Gamma-aminobutyric acid receptor (TC 1.A.9.5) subfamily. GABRG2 sub-subfamily. In terms of assembly, heteropentamer, formed by a combination of alpha (GABRA1-6), beta (GABRB1-3), gamma (GABRG1-3), delta (GABRD), epsilon (GABRE), rho (GABRR1-3), pi (GABRP) and theta (GABRQ) chains, each subunit exhibiting distinct physiological and pharmacological properties. Interacts with GABARAP. Interacts with KIF21B. Identified in a complex of 720 kDa composed of LHFPL4, NLGN2, GABRA1, GABRB2, GABRG2 and GABRB3. Interacts with LHFPL4. Interacts with SHISA7; interaction leads to the regulation of GABA(A) receptor trafficking, channel deactivation kinetics and pharmacology. Palmitoylated by ZDHHC3/GODZ; required for the accumulation of GABA(A) receptors at the postsynaptic membrane of inhibitory GABAergic synapses. Post-translationally, glycosylated. As to expression, expressed in brain (at protein level). Expressed in lungs, in alveolar epithelium.

Its subcellular location is the postsynaptic cell membrane. The protein resides in the cell membrane. The protein localises to the cell projection. It localises to the dendrite. It is found in the cytoplasmic vesicle membrane. It catalyses the reaction chloride(in) = chloride(out). With respect to regulation, allosterically activated by benzodiazepines. Activated by pentobarbital. Inhibited by the antagonist bicuculline. Inhibited by zinc ions. Potentiated by histamine. Its function is as follows. Gamma subunit of the heteropentameric ligand-gated chloride channel gated by gamma-aminobutyric acid (GABA), a major inhibitory neurotransmitter in the brain. GABA-gated chloride channels, also named GABA(A) receptors (GABAAR), consist of five subunits arranged around a central pore and contain GABA active binding site(s) located at the alpha and beta subunit interface(s). When activated by GABA, GABAARs selectively allow the flow of chloride anions across the cell membrane down their electrochemical gradient. Gamma-2/GABRG2-containing GABAARs are found at both synaptic and extrasynaptic sites. Chloride influx into the postsynaptic neuron following GABAAR opening decreases the neuron ability to generate a new action potential, thereby reducing nerve transmission. GABAARs containing alpha-1 and beta-2 or -3 subunits exhibit synaptogenic activity; the gamma-2 subunit being necessary but not sufficient to induce rapid synaptic contacts formation. Extrasynaptic gamma-2-containing receptors contribute to the tonic GABAergic inhibition. GABAARs function also as histamine receptor where histamine binds at the interface of two neighboring beta subunits and potentiates GABA response in a gamma-2 subunit-controlled manner. The polypeptide is Gamma-aminobutyric acid receptor subunit gamma-2 (Rattus norvegicus (Rat)).